We begin with the raw amino-acid sequence, 654 residues long: NADH-ubiquinone oxidoreductase chain 5 (654 aa).

Transmembrane regions (helical) follow at residues 1–21 (MYLA…FLGR), 30–50 (LITC…FYEV), 76–96 (FIYD…SALV), 113–133 (FFAY…GDNY), 135–155 (VMFI…NFWF), 178–198 (FSIG…TTVF), 200–220 (LAPF…LVAA), 241–261 (TPVS…YLLL), 274–294 (LILI…TGLL), 301–320 (VIAY…CGLS), 324–346 (VALF…AGSV), 365–385 (LLPF…ALPF), 406–426 (SGNL…MYSI), 451–471 (PLIM…FGYV), 510–530 (FLPL…YWIF), and 612–632 (TYAM…FFIG).

Belongs to the complex I subunit 5 family.

It is found in the mitochondrion inner membrane. It catalyses the reaction a ubiquinone + NADH + 5 H(+)(in) = a ubiquinol + NAD(+) + 4 H(+)(out). Its function is as follows. Core subunit of the mitochondrial membrane respiratory chain NADH dehydrogenase (Complex I) that is believed to belong to the minimal assembly required for catalysis. Complex I functions in the transfer of electrons from NADH to the respiratory chain. The immediate electron acceptor for the enzyme is believed to be ubiquinone. The protein is NADH-ubiquinone oxidoreductase chain 5 (ND5) of Rhizopus stolonifer (Rhizopus nigricans).